A 217-amino-acid chain; its full sequence is Nitrile hydratase subunit beta (217 aa).

It belongs to the nitrile hydratase subunit beta family. As to quaternary structure, heterodimer of an alpha and a beta chain.

It catalyses the reaction an aliphatic primary amide = an aliphatic nitrile + H2O. NHase catalyzes the hydration of various nitrile compounds to the corresponding amides. The protein is Nitrile hydratase subunit beta (nthB) of Pseudomonas putida (Arthrobacter siderocapsulatus).